The primary structure comprises 436 residues: GTPase Der (436 aa).

EngA-type G domains follow at residues Asn3–Pro167 and Pro177–Gln352. GTP contacts are provided by residues Gly9–Ser16, Asp56–Tyr60, Asn119–Asp122, Gly183–Ser190, Asp230–Ile234, and Asn295–Asp298. A KH-like domain is found at Gln353–Lys436.

It belongs to the TRAFAC class TrmE-Era-EngA-EngB-Septin-like GTPase superfamily. EngA (Der) GTPase family. Associates with the 50S ribosomal subunit.

Its function is as follows. GTPase that plays an essential role in the late steps of ribosome biogenesis. In Flavobacterium psychrophilum (strain ATCC 49511 / DSM 21280 / CIP 103535 / JIP02/86), this protein is GTPase Der.